The chain runs to 479 residues: MKIELVFIPSPAISHLMATVEMAEQLVDKNDNLSITVIIISFSSKNTSMITSLTSNNRLRYEIISGGDQQPTELKATDSHIQSLKPLVRDAVAKLVDSTLPDAPRLAGFVVDMYCTSMIDVANEFGVPSYLFYTSNAGFLGLLLHIQFMYDAEDIYDMSELEDSDVELVVPSLTSPYPLKCLPYIFKSKEWLTFFVTQARRFRETKGILVNTVPDLEPQALTFLSNGNIPRAYPVGPLLHLKNVNCDYVDKKQSEILRWLDEQPPRSVVFLCFGSMGGFSEEQVRETALALDRSGHRFLWSLRRASPNILREPPGEFTNLEEILPEGFFDRTANRGKVIGWAEQVAILAKPAIGGFVSHGGWNSTLESLWFGVPMAIWPLYAEQKFNAFEMVEELGLAVEIKKHWRGDLLLGRSEIVTAEEIEKGIICLMEQDSDVRKRVNEISEKCHVALMDGGSSETALKRFIQDVTENIAWSETES.

Residues serine 275, alanine 342–glutamine 344, histidine 359–glutamate 367, and tyrosine 381–glutamine 384 contribute to the UDP-alpha-D-glucose site.

Belongs to the UDP-glycosyltransferase family.

Functionally, glucosyltransferase that glucosylates the (+) enantiomer of abscisic acid ((+)-ABA). Is not active on structural analogs with alterations to the 8'- and 9'- methyl groups. The chain is UDP-glycosyltransferase 71B6 (UGT71B6) from Arabidopsis thaliana (Mouse-ear cress).